We begin with the raw amino-acid sequence, 266 residues long: Integral membrane protein 2B (266 aa).

Topologically, residues 1–54 (MVKVTFNSALAQKEAKKDEPKSGEEALIIPPDAVAVDCKDPDDVVPVGQRRAWC) are cytoplasmic. A helical; Signal-anchor for type II membrane protein transmembrane segment spans residues 55 to 75 (WCMCFGLAFMLAGVILGGAYL). The Lumenal portion of the chain corresponds to 76–266 (YKYFALQPDD…KFAVETLICS (191 aa)). Positions 102 to 134 (EPSADAPAALYQTIEENIKIFEEEEVEFISVPV) are necessary for interaction with APP and inhibitor effects on APP processing. In terms of domain architecture, BRICHOS spans 137–231 (FADSDPANIV…LCHDKETYKL (95 aa)). 2 cysteine pairs are disulfide-bonded: Cys-164–Cys-223 and Cys-248–Cys-265. An N-linked (GlcNAc...) asparagine glycan is attached at Asn-170.

The protein belongs to the ITM2 family. In terms of assembly, homodimer; disulfide-linked. Interacts with SPPL2A and SPPL2B. Interacts with APP. Mature BRI2 (mBRI2) interacts with the APP amyloid-beta A4 protein; the interaction occurs at the cell surface and in the endocytic compartments and enable alpha- and beta-secretase-induced APP cleavage inhibition. Mature BRI2 (mBRI2) interacts with the APP C99; the interaction occurs in the endocytic compartments and enable gamma-secretase-induced C99 cleavage inhibition. May form heterodimers with Bri23 peptide and APP amyloid-beta protein 40. Interacts with ADAM7 in sperm; the interaction increases following capacitation. Post-translationally, the ectodomain C-terminal part of the imBRI2 is processed by furin producing a secreted Bri23 peptide and a mature BRI2, membrane form (mBRI2). The remaining part of the ectodomain of mBRI2 containing the BRICHOS domain is cleaved by ADAM10 and is secreted (BRI2C, soluble form). The membrane-bound N-terminal fragment (BRI2C, membrane form) is further proteolytically processed by SPPL2A and SPPL2B through regulated intramembrane proteolysis producing a secreted C-peptide and a BRI2 intracellular domain (BRI2 ICD) released in the cytosol. Shedding by ADAM10 facilitates intramembrane cleavage but is not absolutely required for BRI2 ICD generation. Glycosylation at Asn-170 is important for cell surface localization, but doesn't affect furin- and ADAM10-induced proteolytic processing. In terms of tissue distribution, ubiquitous. Expressed in brain.

It is found in the golgi apparatus membrane. The protein localises to the cell membrane. Its subcellular location is the endosome membrane. The protein resides in the secreted. Functionally, plays a regulatory role in the processing of the amyloid-beta A4 precursor protein (APP) and acts as an inhibitor of the amyloid-beta peptide aggregation and fibrils deposition. Plays a role in the induction of neurite outgrowth. Functions as a protease inhibitor by blocking access of secretases to APP cleavage sites. Its function is as follows. Mature BRI2 (mBRI2) functions as a modulator of the amyloid-beta A4 precursor protein (APP) processing leading to a strong reduction in the secretion of secretase-processed amyloid-beta protein 40 and amyloid-beta protein 42. Bri23 peptide prevents aggregation of APP amyloid-beta protein 42 into toxic oligomers. The polypeptide is Integral membrane protein 2B (ITM2B) (Homo sapiens (Human)).